Consider the following 401-residue polypeptide: O-methyltransferase SAT18 (401 aa).

Asp-249 is a binding site for S-adenosyl-L-methionine. Catalysis depends on His-300, which acts as the Proton acceptor.

Belongs to the class I-like SAM-binding methyltransferase superfamily. Cation-independent O-methyltransferase family.

It functions in the pathway mycotoxin biosynthesis. Functionally, O-methyltransferase; part of the satratoxin SC3 cluster involved in the biosynthesis of satratoxins, trichothecene mycotoxins that are associated with human food poisonings. Satratoxins are suggested to be made by products of multiple gene clusters (SC1, SC2 and SC3) that encode 21 proteins in all, including polyketide synthases, acetyltransferases, and other enzymes expected to modify the trichothecene skeleton. SC1 encodes 10 proteins, SAT1 to SAT10. The largest are SAT8, which encodes a putative polyketide synthase (PKS) with a conventional non-reducing architecture, and SAT10, a putative protein containing four ankyrin repeats and thus may be involved in protein scaffolding. The putative short-chain reductase SAT3 may assist the PKS in some capacity. SAT6 contains a secretory lipase domain and acts probably as a trichothecene esterase. SAT5 encodes a putative acetyltransferase, and so, with SAT6, may affect endogenous protection from toxicity. The probable transcription factor SAT9 may regulate the expression of the SC1 cluster. SC2 encodes proteins SAT11 to SAT16, the largest of which encodes the putative reducing PKS SAT13. SAT11 is a cytochrome P450 monooxygenase, while SAT14 and SAT16 are probable acetyltransferases. The SC2 cluster may be regulated by the transcription factor SAT15. SC3 is a small cluster that encodes 5 proteins, SAT17 to SAT21. SAT21 is a putative MFS-type transporter which may have a role in exporting secondary metabolites. The four other proteins putatively encoded in SC3 include the taurine hydroxylase-like protein SAT17, the O-methyltransferase SAT18, the acetyltransferase SAT19, and the Cys6-type zinc finger SAT20, the latter being probably involved in regulation of SC3 expression. The sequence is that of O-methyltransferase SAT18 from Stachybotrys chartarum (strain CBS 109288 / IBT 7711) (Toxic black mold).